The following is a 365-amino-acid chain: 3-isopropylmalate dehydrogenase (365 aa).

An NAD(+)-binding site is contributed by 80–93 (GPKWADNTGDQRPE). Positions 100, 110, 138, and 223 each coordinate substrate. 3 residues coordinate Mg(2+): aspartate 223, aspartate 247, and aspartate 251. 280-292 (GSAPDIAGQDVAN) is a binding site for NAD(+). The interval 337–365 (NEEDASTSAFGREVATRAADSVPQNAPTP) is disordered.

Belongs to the isocitrate and isopropylmalate dehydrogenases family. LeuB type 1 subfamily. Homodimer. Mg(2+) serves as cofactor. Requires Mn(2+) as cofactor.

It localises to the cytoplasm. The catalysed reaction is (2R,3S)-3-isopropylmalate + NAD(+) = 4-methyl-2-oxopentanoate + CO2 + NADH. The protein operates within amino-acid biosynthesis; L-leucine biosynthesis; L-leucine from 3-methyl-2-oxobutanoate: step 3/4. Functionally, catalyzes the oxidation of 3-carboxy-2-hydroxy-4-methylpentanoate (3-isopropylmalate) to 3-carboxy-4-methyl-2-oxopentanoate. The product decarboxylates to 4-methyl-2 oxopentanoate. This Salinibacter ruber (strain DSM 13855 / M31) protein is 3-isopropylmalate dehydrogenase.